The sequence spans 380 residues: 3-dehydroquinate synthase (380 aa).

This sequence belongs to the archaeal-type DHQ synthase family.

It catalyses the reaction 2-amino-2,3,7-trideoxy-D-lyxo-hept-6-ulosonate + NAD(+) + H2O = 3-dehydroquinate + NH4(+) + NADH + H(+). In terms of biological role, catalyzes the oxidative deamination and cyclization of 2-amino-3,7-dideoxy-D-threo-hept-6-ulosonic acid (ADH) to yield 3-dehydroquinate (DHQ), which is fed into the canonical shikimic pathway of aromatic amino acid biosynthesis. The chain is 3-dehydroquinate synthase from Methanosarcina mazei (strain ATCC BAA-159 / DSM 3647 / Goe1 / Go1 / JCM 11833 / OCM 88) (Methanosarcina frisia).